The primary structure comprises 172 residues: Conglutin-7 (172 aa).

The first 21 residues, 1–21 (MAKLTILVALALFLLAAHASA), serve as a signal peptide directing secretion. Cystine bridges form between cysteine 33–cysteine 116, cysteine 45–cysteine 103, cysteine 104–cysteine 152, and cysteine 118–cysteine 160. A disordered region spans residues 54-98 (QRDEDSYGRDPYSPSQDPYSPSQDPDRRDPYSPSPYDRRGAGSSQ). Low complexity predominate over residues 62-76 (RDPYSPSQDPYSPSQ). Proline 67, proline 74, and proline 86 each carry 4-hydroxyproline. The segment covering 77 to 98 (DPDRRDPYSPSPYDRRGAGSSQ) has biased composition (basic and acidic residues).

It belongs to the 2S seed storage albumins family. The hydroxyproline modifications determined by mass spectrometry are probably 4-hydroxyproline as determined for other extracellular plant proteins. As to expression, expressed in seeds, not expressed in leaves, roots and pegs.

Weak inhibitor of trypsin. The sequence is that of Conglutin-7 from Arachis hypogaea (Peanut).